A 613-amino-acid chain; its full sequence is Ribosome-associated molecular chaperone SSB1 (613 aa).

The tract at residues 1 to 391 is nucleotide binding domain (NBD); it reads MAEGVFPGAI…ILTGQSTSDE (391 aa). ATP-binding positions include 16–18, Lys73, 205–207, 271–278, and Gly342; these read TTY, GGT, and ERAKRTLS. The inter-domain linker stretch occupies residues 392 to 402; it reads TKDLLLLDVAP. The substrate binding domain (SBD) stretch occupies residues 403–613; that stretch reads LSLGVGMAGD…RAVTKAMSTR (211 aa). Residues 516 to 612 are lid domain (SBDalpha); that stretch reads SEEIEQMVNQ…KRAVTKAMST (97 aa). A Nuclear export signal motif is present at residues 574–582; that stretch reads VEAALADAF.

The protein belongs to the heat shock protein 70 family. Ssb-type Hsp70 subfamily. In terms of assembly, binds to ribosomes. Binds close to the ribosomal tunnel exit via contacts with both ribosomal proteins and rRNA. Directly interacts with nascent polypeptides. This interaction is dependent on the ribosome-associated complex (RAC). Interacts with SSE1. Interacts with FES1.

It is found in the cytoplasm. The enzyme catalyses ATP + H2O = ADP + phosphate + H(+). In terms of biological role, ribosome-bound, Hsp70-type chaperone that assists in the cotranslational folding of newly synthesized proteins in the cytosol. Stimulates folding by interacting with nascent chains, binding to short, largely hydrophobic sequences exposed by unfolded proteins, thereby stabilizing longer, more slowly translated, and aggregation-prone nascent polypeptides and domains that cannot fold stably until fully synthesized. The Hsp70-protein substrate interaction depends on ATP-binding and on allosteric regulation between the NBD and the SBD. The ATP-bound state is characterized by a fast exchange rate of substrate (low affinity state), while in the ADP-bound state exchange is much slower (high affinity state). During the Hsp70 cycle, the chaperone switches between the ATP-bound state (open conformation) and the ADP-bound state (closed conformation) by major conformational rearrangements involving mainly the lid domain. Ssb cooperates with a specific Hsp40/Hsp70 co-chaperone termed the ribosome-associated complex (RAC), which stimulates the ATPase activity of the ribosome-associated pool of Ssbs and switches it to the high affinity substrate binding state. Hsp110 chaperone SSE1 and FES1 act as nucleotide exchange factors that cause substrate release. This is Ribosome-associated molecular chaperone SSB1 (SSB1) from Kluyveromyces marxianus (Yeast).